The primary structure comprises 1472 residues: Adhesion G protein-coupled receptor L1 (1472 aa).

A signal peptide spans methionine 1–glycine 24. Residues leucine 25–leucine 857 lie on the Extracellular side of the membrane. Positions alanine 40–valine 129 constitute an SUEL-type lectin domain. 5 cysteine pairs are disulfide-bonded: cysteine 41/cysteine 71, cysteine 50/cysteine 128, cysteine 83/cysteine 115, cysteine 96/cysteine 102, and cysteine 140/cysteine 322. Residue glutamate 42 coordinates alpha-L-rhamnose. N-linked (GlcNAc...) asparagine glycosylation occurs at asparagine 98. Glycine 117–lysine 120 contributes to the alpha-L-rhamnose binding site. The region spanning valine 139–proline 398 is the Olfactomedin-like domain. The segment at aspartate 400–proline 468 is disordered. Residues proline 405–threonine 441 are compositionally biased toward low complexity. Pro residues predominate over residues aspartate 453–proline 468. 2 disulfides stabilise this stretch: cysteine 480–cysteine 515 and cysteine 503–cysteine 532. Residues asparagine 531, asparagine 640, asparagine 741, asparagine 800, asparagine 805, and asparagine 826 are each glycosylated (N-linked (GlcNAc...) asparagine). The 182-residue stretch at proline 669–tyrosine 850 folds into the GAIN-B domain. 2 cysteine pairs are disulfide-bonded: cysteine 801/cysteine 832 and cysteine 820/cysteine 834. Positions cysteine 801–tyrosine 850 are GPS. A helical transmembrane segment spans residues leucine 858 to isoleucine 878. Residues serine 879–asparagine 892 are Cytoplasmic-facing. Residues threonine 893–isoleucine 913 form a helical membrane-spanning segment. Topologically, residues aspartate 914 to glutamate 919 are extracellular. A helical transmembrane segment spans residues isoleucine 920 to leucine 940. Residues cysteine 941–lysine 963 are Cytoplasmic-facing. A helical membrane pass occupies residues tyrosine 964–aspartate 984. The Extracellular segment spans residues tyrosine 985 to tyrosine 1001. A helical membrane pass occupies residues phenylalanine 1002 to methionine 1022. Over valine 1023–alanine 1049 the chain is Cytoplasmic. A helical membrane pass occupies residues leucine 1050–isoleucine 1070. The Extracellular portion of the chain corresponds to asparagine 1071–serine 1074. A helical transmembrane segment spans residues valine 1075 to phenylalanine 1095. At histidine 1096–leucine 1472 the chain is on the cytoplasmic side. At arginine 1193 the chain carries Omega-N-methylarginine. Position 1219 is a phosphoserine (serine 1219). 4 disordered regions span residues phenylalanine 1247–arginine 1271, asparagine 1291–glycine 1325, glutamate 1358–proline 1427, and tyrosine 1449–leucine 1472. 2 stretches are compositionally biased toward pro residues: residues glycine 1301–proline 1313 and alanine 1406–proline 1418. Position 1471 is a phosphoserine (serine 1471).

Belongs to the G-protein coupled receptor 2 family. Adhesion G-protein coupled receptor (ADGR) subfamily. As to quaternary structure, forms a heterodimer, consisting of a large extracellular region (p120) non-covalently linked to a seven-transmembrane moiety (p85). Interacts with syntaxin and with proteins of the SHANK family via the PDZ domain. Interacts (via extracellular domain) with FLRT1, FLRT2 and FLRT3 (via extracellular domain). In terms of processing, autoproteolytically cleaved into 2 subunits, an extracellular subunit and a seven-transmembrane subunit. This proteolytic processing takes place early in the biosynthetic pathway, either in the endoplasmic reticulum or in the early compartment of the Golgi apparatus. Brain-specific expression but low levels are also detected in kidney, lung and spleen.

The protein resides in the cell membrane. It is found in the cell projection. The protein localises to the axon. It localises to the growth cone. Its subcellular location is the synapse. The protein resides in the presynaptic cell membrane. It is found in the synaptosome. Functionally, calcium-independent receptor of high affinity for alpha-latrotoxin, an excitatory neurotoxin present in black widow spider venom which triggers massive exocytosis from neurons and neuroendocrine cells. Receptor for TENM2 that mediates heterophilic synaptic cell-cell contact and postsynaptic specialization. Receptor probably implicated in the regulation of exocytosis. The sequence is that of Adhesion G protein-coupled receptor L1 from Bos taurus (Bovine).